We begin with the raw amino-acid sequence, 201 residues long: Cysteine dioxygenase type 1 (201 aa).

3 residues coordinate Fe cation: histidine 86, histidine 88, and histidine 141. Positions 93–158 (CFLKLLQGQL…TEPAVSLHLY (66 aa)) form a cross-link, 3'-(S-cysteinyl)-tyrosine (Cys-Tyr).

It belongs to the cysteine dioxygenase family. As to quaternary structure, monomer. The cofactor is Fe cation. Ni(2+) serves as cofactor. Requires Zn(2+) as cofactor. The thioether cross-link between Cys-93 and Tyr-158 plays a structural role through stabilizing the Fe(2+) ion, and prevents the production of highly damaging free hydroxyl radicals by holding the oxygen radical via hydroxyl hydrogen.

The catalysed reaction is L-cysteine + O2 = 3-sulfino-L-alanine + H(+). It functions in the pathway organosulfur biosynthesis; taurine biosynthesis; hypotaurine from L-cysteine: step 1/2. Its function is as follows. Catalyzes the oxidation of cysteine to cysteine sulfinic acid with addition of molecular dioxygen. The chain is Cysteine dioxygenase type 1 (cdo1) from Danio rerio (Zebrafish).